Here is a 295-residue protein sequence, read N- to C-terminus: Non-selective voltage-gated ion channel VDAC2 (295 aa).

The ATP site is built by lysine 24 and lysine 32. Lysine 32 carries the N6-acetyllysine; alternate modification. The residue at position 32 (lysine 32) is an N6-succinyllysine; alternate. A Glycyl lysine isopeptide (Lys-Gly) (interchain with G-Cter in ubiquitin); alternate cross-link involves residue lysine 32. 2 beta stranded membrane-spanning segments follow: residues 38–47 (LVKLDVKTKS) and 51–59 (VEFSTSGSS). Glycyl lysine isopeptide (Lys-Gly) (interchain with G-Cter in ubiquitin) cross-links involve residues lysine 65 and lysine 73. 4 beta stranded membrane-spanning segments follow: residues 66–76 (VSGTLETKYKW), 81–88 (LTFTEKWN), 92–101 (TLGTEIAIED), and 107–116 (LKLTFDTTFS). An N6-acetyllysine; alternate modification is found at lysine 121. Residue lysine 121 forms a Glycyl lysine isopeptide (Lys-Gly) (interchain with G-Cter in ubiquitin); alternate linkage. Glycyl lysine isopeptide (Lys-Gly) (interchain with G-Cter in ubiquitin) cross-links involve residues lysine 122 and lysine 125. A run of 4 beta stranded transmembrane segments spans residues 123–132 (SGKIKSAYKR), 135–142 (INLGCDVD), 149–157 (AIHGSAVFG), and 162–170 (LAGYQMTFD). Lysine 173 is covalently cross-linked (Glycyl lysine isopeptide (Lys-Gly) (interchain with G-Cter in ubiquitin)). Transmembrane regions (beta stranded) follow at residues 175–187 (KLTR…GYRT), 190–197 (FQLHTNVN), 201–210 (EFGGSIYQKV), 214–223 (FDTSVNLAWT), 230–239 (RFGIAAKYQL), and 243–250 (ASISAKVN). Phosphoserine is present on serine 205. Serine 252 is subject to Phosphoserine. Residues 254–256 (LIG) and 272–276 (SALVD) each bind NAD(+). 2 beta stranded membrane-spanning segments follow: residues 254 to 263 (LIGVGYTQTL) and 266 to 275 (GVKLTLSALV). Lysine 278 carries the post-translational modification N6-acetyllysine; alternate. Residue lysine 278 forms a Glycyl lysine isopeptide (Lys-Gly) (interchain with G-Cter in ubiquitin); alternate linkage. The beta stranded transmembrane segment at 285 to 294 (HKLGLALELE) threads the bilayer. Lysine 286 is covalently cross-linked (Glycyl lysine isopeptide (Lys-Gly) (interchain with G-Cter in ubiquitin)).

This sequence belongs to the eukaryotic mitochondrial porin family. As to quaternary structure, monomer, homodimer and higher order oligomers; formation of higher order structures is necessary for scramblase activity. Interacts with ARMC12 in a TBC1D21-dependent manner. Interacts with KLC3. Interacts with SPATA33. Interacts with PPP3CC in a SPATA33-dependent manner. In terms of processing, ubiquitinated by PRKN during mitophagy, leading to its degradation and enhancement of mitophagy. Deubiquitinated by USP30.

It is found in the mitochondrion outer membrane. The protein resides in the membrane. The enzyme catalyses chloride(in) = chloride(out). It carries out the reaction K(+)(in) = K(+)(out). It catalyses the reaction a 1,2-diacyl-sn-glycero-3-phospho-L-serine(in) = a 1,2-diacyl-sn-glycero-3-phospho-L-serine(out). The catalysed reaction is a 1,2-diacyl-sn-glycero-3-phosphocholine(in) = a 1,2-diacyl-sn-glycero-3-phosphocholine(out). The enzyme catalyses a 1,2-diacyl-sn-glycero-3-phospho-(1D-myo-inositol)(in) = a 1,2-diacyl-sn-glycero-3-phospho-(1D-myo-inositol)(out). In terms of biological role, non-selective voltage-gated ion channel that mediates the transport of anions and cations through the mitochondrion outer membrane and plasma membrane. The channel adopts an open conformation at zero mV and a closed conformation at both positive and negative potentials. There are two populations of channels; the main that functions in a lower open-state conductance with lower ion selectivity, that switch, in a voltage-dependent manner, from the open to a low-conducting 'closed' state and the other that has a normal ion selectivity in the typical high conductance, 'open' state. Binds various lipids, including the sphingolipid ceramide, the phospholipid phosphatidylcholine, and the sterols cholesterol and oxysterol. Binding of ceramide promotes the mitochondrial outer membrane permeabilization (MOMP) apoptotic pathway. Functionally, catalyzes the scrambling of phospholipids across the outer mitochondrial membrane; the mechanism is unrelated to channel activity and is capable of translocating both anionic and zwitterionic phospholipids. This chain is Non-selective voltage-gated ion channel VDAC2, found in Mesocricetus auratus (Golden hamster).